Reading from the N-terminus, the 924-residue chain is DNA repair and recombination protein RDH54 (924 aa).

Over residues 1–10 the composition is skewed to basic and acidic residues; that stretch reads MQIPKYENKP. 2 disordered regions span residues 1–21 and 155–182; these read MQIPKYENKPFKPPRRVGSNK and EALSQNMGNPNPPTTSTTETVPSTKNDG. Residues 168-178 show a composition bias toward low complexity; that stretch reads TTSTTETVPST. The 189-residue stretch at 299–487 folds into the Helicase ATP-binding domain; the sequence is LENDSDISGC…FTIIDFINPG (189 aa). 346 to 353 is an ATP binding site; the sequence is IPLTGLCK. The short motif at 472–475 is the DEGH box element; sequence NDLN. Lys615 is covalently cross-linked (Glycyl lysine isopeptide (Lys-Gly) (interchain with G-Cter in ubiquitin)). The Helicase C-terminal domain maps to 631–790; sequence KLRVLMTLLE…DSEMRNKESS (160 aa).

Belongs to the SNF2/RAD54 helicase family. As to quaternary structure, interacts with RAD51 and DMC1.

Its subcellular location is the nucleus. The enzyme catalyses ATP + H2O = ADP + phosphate + H(+). Functionally, involved in the recombinational repair of double-strand breaks (DSB) in DNA during mitosis and meiosis. Has DNA dependent ATPase activity. Promotes D-loop (displacement loop) formation with RAD51 recombinase. Modifies the topology of double-stranded DNA during the D-loop reaction to facilitate the invasion of the homologous duplex molecule by the initiating single-stranded DNA substrate. Required for adaptation from G2/M checkpoint arrest induced by a double strand break, by participating in monitoring the extent of single-stranded DNA produced by resection of DNA ends. This role is distinct from its roles in recombination. Promotes colocalization of RAD51 and DMC1 during meiotic recombination. Involved in crossover interference. This chain is DNA repair and recombination protein RDH54 (RDH54), found in Saccharomyces cerevisiae (strain AWRI1631) (Baker's yeast).